A 172-amino-acid chain; its full sequence is Carotene biosynthesis-related protein CBR, chloroplastic (172 aa).

The interval 41–66 (AENNPSTPPPSSPSPPPPPPTPAAPT) is disordered. Pro residues predominate over residues 46–63 (STPPPSSPSPPPPPPTPA). The next 2 membrane-spanning stretches (helical) occupy residues 111 to 131 (PTLI…PAFA) and 152 to 172 (FAMI…IALF).

The protein belongs to the ELIP/psbS family.

The protein resides in the plastid. It is found in the chloroplast membrane. Putative zeaxanthin binding protein. That forms photoprotective complexes within the light-harvesting antennae. The polypeptide is Carotene biosynthesis-related protein CBR, chloroplastic (CBR) (Dunaliella salina (Green alga)).